The primary structure comprises 166 residues: HTH-type transcriptional regulator PecS (166 aa).

An HTH marR-type domain is found at 25 to 160; the sequence is PMLVIGTLSR…LRALLGRVEK (136 aa).

The protein resides in the cytoplasm. The presence of PecM is required to ensure the full regulation of the pecS-pecM intergenic region by PecS. Negatively regulates the expression of genes encoding pectinase and cellulase, which play a major role in virulence, and the expression of the blue pigment indigoidine, which is implicated in pathogenicity and protection from oxidative stress. Represses the expression of genes involved in indigoidine biosynthesis by binding to indA and indC promoter regions. Also binds to promoter sites in the pecS-pecM intergenic region and negatively autoregulates its expression as well as that of pecM. The chain is HTH-type transcriptional regulator PecS from Dickeya dadantii (strain 3937) (Erwinia chrysanthemi (strain 3937)).